Consider the following 254-residue polypeptide: Triosephosphate isomerase (254 aa).

Residue 9 to 11 (NWK) participates in substrate binding. Catalysis depends on histidine 95, which acts as the Electrophile. Glutamate 167 serves as the catalytic Proton acceptor. Residues glycine 173, serine 213, and 234–235 (GG) contribute to the substrate site.

The protein belongs to the triosephosphate isomerase family. In terms of assembly, homodimer.

The protein resides in the cytoplasm. It catalyses the reaction D-glyceraldehyde 3-phosphate = dihydroxyacetone phosphate. It participates in carbohydrate biosynthesis; gluconeogenesis. It functions in the pathway carbohydrate degradation; glycolysis; D-glyceraldehyde 3-phosphate from glycerone phosphate: step 1/1. Involved in the gluconeogenesis. Catalyzes stereospecifically the conversion of dihydroxyacetone phosphate (DHAP) to D-glyceraldehyde-3-phosphate (G3P). This is Triosephosphate isomerase from Roseiflexus castenholzii (strain DSM 13941 / HLO8).